Consider the following 185-residue polypeptide: Putative lipoprotein LprB (185 aa).

A signal peptide spans 1 to 24 (MRRKVRRLTLAVSALVALFPAVAG). Cys-25 is lipidated: N-palmitoyl cysteine. The S-diacylglycerol cysteine moiety is linked to residue Cys-25. The interval 26-50 (SDSGDNKPGATIPSTPANAEGRHGP) is disordered.

It is found in the cell membrane. In Mycobacterium tuberculosis (strain CDC 1551 / Oshkosh), this protein is Putative lipoprotein LprB (lprB).